The following is a 453-amino-acid chain: F-box protein SKIP14 (453 aa).

The F-box; degenerate domain maps to R34 to S104.

In terms of assembly, part of a SCF (ASK-cullin-F-box) protein ligase complex. Interacts with CUL1, SKP1A/ASK1 and SPK1B/ASK2.

It functions in the pathway protein modification; protein ubiquitination. In terms of biological role, component of SCF(ASK-cullin-F-box) E3 ubiquitin ligase complexes, which may mediate the ubiquitination and subsequent proteasomal degradation of target proteins. In Arabidopsis thaliana (Mouse-ear cress), this protein is F-box protein SKIP14 (SKIP14).